Reading from the N-terminus, the 271-residue chain is 3-methyl-2-oxobutanoate hydroxymethyltransferase (271 aa).

Positions 53 and 92 each coordinate Mg(2+). 3-methyl-2-oxobutanoate-binding positions include 53–54 (DS), Asp-92, and Lys-120. Residue Glu-122 participates in Mg(2+) binding. Glu-189 (proton acceptor) is an active-site residue.

Belongs to the PanB family. Homodecamer; pentamer of dimers. Mg(2+) is required as a cofactor.

It localises to the cytoplasm. It catalyses the reaction 3-methyl-2-oxobutanoate + (6R)-5,10-methylene-5,6,7,8-tetrahydrofolate + H2O = 2-dehydropantoate + (6S)-5,6,7,8-tetrahydrofolate. Its pathway is cofactor biosynthesis; (R)-pantothenate biosynthesis; (R)-pantoate from 3-methyl-2-oxobutanoate: step 1/2. Its function is as follows. Catalyzes the reversible reaction in which hydroxymethyl group from 5,10-methylenetetrahydrofolate is transferred onto alpha-ketoisovalerate to form ketopantoate. The chain is 3-methyl-2-oxobutanoate hydroxymethyltransferase from Burkholderia mallei (strain NCTC 10247).